The sequence spans 223 residues: Putative N-acetylmannosamine-6-phosphate 2-epimerase (223 aa).

The protein belongs to the NanE family.

It catalyses the reaction an N-acyl-D-glucosamine 6-phosphate = an N-acyl-D-mannosamine 6-phosphate. It functions in the pathway amino-sugar metabolism; N-acetylneuraminate degradation; D-fructose 6-phosphate from N-acetylneuraminate: step 3/5. Converts N-acetylmannosamine-6-phosphate (ManNAc-6-P) to N-acetylglucosamine-6-phosphate (GlcNAc-6-P). In Staphylococcus haemolyticus (strain JCSC1435), this protein is Putative N-acetylmannosamine-6-phosphate 2-epimerase.